Here is a 106-residue protein sequence, read N- to C-terminus: MNKIRKGDEVIVLTGRDKGKRGTVSLRKDDSHLVIEGINLVKKHVKPNPMKGTTGGIVEKAMPIHQSNVAIFNAATGKADRVGIKVQADGTRVRVFKSSGAEIKAA.

It belongs to the universal ribosomal protein uL24 family. As to quaternary structure, part of the 50S ribosomal subunit.

Functionally, one of two assembly initiator proteins, it binds directly to the 5'-end of the 23S rRNA, where it nucleates assembly of the 50S subunit. Its function is as follows. One of the proteins that surrounds the polypeptide exit tunnel on the outside of the subunit. The chain is Large ribosomal subunit protein uL24 from Acidovorax sp. (strain JS42).